The sequence spans 612 residues: Citryl-spermidine/3,4-dihydroxybenzoyl-citryl-spermidine:spermidine ligase (612 aa).

ATP is bound by residues 282-284, Lys-298, Arg-310, Tyr-390, and Glu-461; that span reads SMR.

Belongs to the IucA/IucC family. As to quaternary structure, homodimer.

It carries out the reaction N(8)-citryl-spermidine + spermidine + ATP = N(8),N'(8)-citryl-bis(spermidine) + AMP + diphosphate + H(+). It catalyses the reaction N(1)-(3,4-dihydroxybenzoyl)-N(8)-citryl-spermidine + spermidine + ATP = N(1)-(3,4-dihydroxybenzoyl)-N(8),N'(8)-citryl-bis(spermidine) + AMP + diphosphate + H(+). Its pathway is siderophore biosynthesis; petrobactin biosynthesis. Functionally, involved in the biosynthesis of petrobactin, a catecholate siderophore that functions in both iron acquisition and virulence. Catalyzes the ATP-dependent condensation of spermidine with N(8)-citryl-spermidine or N(1)-(3,4-dihydroxbenzoyl)-N(8)-citryl-spermidine, two intermediates in petrobactin biosynthesis pathway. This is Citryl-spermidine/3,4-dihydroxybenzoyl-citryl-spermidine:spermidine ligase from Bacillus anthracis.